We begin with the raw amino-acid sequence, 205 residues long: Large ribosomal subunit protein uL4 (205 aa).

The tract at residues 43–95 (RSGNRAQKDRAEVKHSTKKPWRQKGTGRARAGMTSSPLWRGGGRAFPNSPEEN) is disordered. The segment covering 48–57 (AQKDRAEVKH) has biased composition (basic and acidic residues). The span at 58–69 (STKKPWRQKGTG) shows a compositional bias: basic residues.

The protein belongs to the universal ribosomal protein uL4 family. In terms of assembly, part of the 50S ribosomal subunit.

In terms of biological role, one of the primary rRNA binding proteins, this protein initially binds near the 5'-end of the 23S rRNA. It is important during the early stages of 50S assembly. It makes multiple contacts with different domains of the 23S rRNA in the assembled 50S subunit and ribosome. Functionally, forms part of the polypeptide exit tunnel. This Bordetella pertussis (strain Tohama I / ATCC BAA-589 / NCTC 13251) protein is Large ribosomal subunit protein uL4.